The chain runs to 321 residues: Cytoskeleton protein RodZ (321 aa).

At 1 to 111 (MNTEATHDQN…LGKRRKKRDG (111 aa)) the chain is on the cytoplasmic side. Residues 19–71 (LRNAREQLGLSQQAVAERLCLKVSTVRDIEEDKAPSDLASTFLRGYIRSYARL) form the HTH cro/C1-type domain. Positions 30-49 (QQAVAERLCLKVSTVRDIEE) form a DNA-binding region, H-T-H motif. The chain crosses the membrane as a helical; Signal-anchor for type II membrane protein span at residues 112-132 (WLMSFTWLVLFVVVGLTGAWW). Residues 133–321 (WQNHKAQQEE…TINAEPTSAQ (189 aa)) are Periplasmic-facing. Residues 167 to 190 (DTRAAASQDTTPAETAPAAPVDST) form a disordered region. A compositionally biased stretch (low complexity) spans 176–190 (TTPAETAPAAPVDST).

This sequence belongs to the RodZ family.

The protein resides in the cell inner membrane. In terms of biological role, cytoskeletal protein that is involved in cell-shape control through regulation of the length of the long axis. In Salmonella arizonae (strain ATCC BAA-731 / CDC346-86 / RSK2980), this protein is Cytoskeleton protein RodZ.